The sequence spans 352 residues: B1 bradykinin receptor (352 aa).

Residues 1 to 41 are Extracellular-facing; it reads MASWPPLQLQSSNQSQLFPQNATACDNAPEAWDLLHRVLPT. N-linked (GlcNAc...) asparagine glycans are attached at residues N13 and N21. A helical membrane pass occupies residues 42–62; the sequence is FIISICSFGLLGNLFVLLVFL. At 63–72 the chain is on the cytoplasmic side; sequence LPRRRLNVAE. The chain crosses the membrane as a helical span at residues 73–93; it reads IYLANLAASDLVFVLGLPFWA. Residues 94-110 lie on the Extracellular side of the membrane; the sequence is ENIWNQFNWPFGALLCR. An intrachain disulfide couples C109 to C188. The helical transmembrane segment at 111–131 threads the bilayer; that stretch reads VINGIIKANLFISIFLVVAIS. At 132–153 the chain is on the cytoplasmic side; sequence QDRYCVLVHPMASRRRQRRRQA. Residues 154 to 174 traverse the membrane as a helical segment; it reads RVTCVLIWVVGGLLSIPTFLL. At 175–206 the chain is on the extracellular side; sequence RSIQAVPDLNITACILLLPHEAWHFARIVELN. Residue N184 is glycosylated (N-linked (GlcNAc...) asparagine). Residues 207–227 form a helical membrane-spanning segment; sequence ILAFLLPLAAIIFFNYHILAS. At 228–250 the chain is on the cytoplasmic side; it reads LRGREEVSRTRCGGSKDSKTTAL. Residues 251–271 traverse the membrane as a helical segment; the sequence is ILTLVVAFLVCWAPYHFFAFL. Residues 272-294 lie on the Extracellular side of the membrane; sequence EFLFQVQAVRGCFWEDFIDLGLQ. A helical membrane pass occupies residues 295–315; that stretch reads LANFLAFTNSSLNPVIYVFAG. At 316–352 the chain is on the cytoplasmic side; that stretch reads RLFRTKVWELYKQCTPKSLAPISSSHRKEIFQLFWRN. The S-palmitoyl cysteine moiety is linked to residue C329.

The protein belongs to the G-protein coupled receptor 1 family. Bradykinin receptor subfamily. BDKRB1 sub-subfamily.

The protein resides in the cell membrane. This is a receptor for bradykinin. Could be a factor in chronic pain and inflammation. The polypeptide is B1 bradykinin receptor (BDKRB1) (Macaca fascicularis (Crab-eating macaque)).